We begin with the raw amino-acid sequence, 274 residues long: MAVIKCKPTSPGRRHVVKVVNSDLHKGKPFAGLLAKKSKSGGRNNTGRITVRHVGGGHKQHYRLIDFKRDKDGIPAKIERLEYDPNRTAHIALVLYADGERRYILAAKGMQAGDKIQSGVEAEIKTGNAMPLRNIPVGSVVHAVEMKPGKGAQIARSAGAYVQVVARDGAYATLRLRSGEMRKVPVDCRATFGEVGNAEHMLRQLGKAGAKRWRGIRPTVRGVAMNPVDHPHGGGEGRTSGGRHPVTPWGVPTKGYKTRSNKRTDKYIVRRRNK.

The interval 223–274 (VAMNPVDHPHGGGEGRTSGGRHPVTPWGVPTKGYKTRSNKRTDKYIVRRRNK) is disordered.

The protein belongs to the universal ribosomal protein uL2 family. Part of the 50S ribosomal subunit. Forms a bridge to the 30S subunit in the 70S ribosome.

Functionally, one of the primary rRNA binding proteins. Required for association of the 30S and 50S subunits to form the 70S ribosome, for tRNA binding and peptide bond formation. It has been suggested to have peptidyltransferase activity; this is somewhat controversial. Makes several contacts with the 16S rRNA in the 70S ribosome. In Shewanella oneidensis (strain ATCC 700550 / JCM 31522 / CIP 106686 / LMG 19005 / NCIMB 14063 / MR-1), this protein is Large ribosomal subunit protein uL2.